A 1591-amino-acid polypeptide reads, in one-letter code: Rho guanine nucleotide exchange factor TIAM1 (1591 aa).

The disordered stretch occupies residues 1–78; the sequence is MGNAESQHVE…AENGLEPFSQ (78 aa). Glycine 2 is lipidated: N-myristoyl glycine. Residues 7 to 19 show a composition bias toward basic and acidic residues; it reads QHVEHEFYGEKHA. The segment covering 20-49 has biased composition (basic residues); the sequence is SLGRKHTSRSLRLSHKTRRTRHASSGKVIH. A compositionally biased stretch (low complexity) spans 53-67; the sequence is EVSTRSSSTPSIPQS. Serine 231 bears the Phosphoserine mark. Disordered stretches follow at residues 298–379 and 393–422; these read SEGA…GDAA and MSTT…SPGQ. 2 stretches are compositionally biased toward polar residues: residues 300-313 and 340-361; these read GATN…NSMQ and TTDT…SPTT. 2 positions are modified to phosphoserine: serine 356 and serine 358. Positions 367–377 are enriched in low complexity; that stretch reads GSDSGSSSTGD. Residues 412–422 show a composition bias toward polar residues; that stretch reads QSSGTLSSPGQ. The region spanning 434–549 is the PH 1 domain; the sequence is VRKAGALAVK…TAIHSACATA (116 aa). Serine 695 carries the post-translational modification Phosphoserine. One can recognise an RBD domain in the interval 765–832; that stretch reads TPSWFCLPNN…QPEEDIYELL (68 aa). Tyrosine 829 carries the phosphotyrosine; by NTRK2 modification. A PDZ domain is found at 845 to 908; that stretch reads SIHIEKSDTA…NNRAADALNS (64 aa). The tract at residues 939–1034 is disordered; that stretch reads SPPHRVDGPA…TGPQLATMRQ (96 aa). Over residues 958-975 the composition is skewed to polar residues; the sequence is LTSNPGHSLCSEQGSSAE. Residues 977–990 are compositionally biased toward acidic residues; the sequence is APEETEGPDLESSD. Residues 1014-1024 are compositionally biased toward low complexity; the sequence is PSDQSPSPQDS. A compositionally biased stretch (polar residues) spans 1025–1034; that stretch reads TGPQLATMRQ. The 195-residue stretch at 1040–1234 folds into the DH domain; sequence KLRKVICELL…NKVASHINEM (195 aa). Residues 1261–1397 form the PH 2 domain; it reads DLSMGDLLLH…KAVHSILRDK (137 aa). A Phosphotyrosine modification is found at tyrosine 1323. Residues lysine 1404 and lysine 1420 each participate in a glycyl lysine isopeptide (Lys-Gly) (interchain with G-Cter in ubiquitin) cross-link. The interval 1456 to 1482 is disordered; that stretch reads TIDSDAVSASSPEKESQQPPGGGDTDR. Serine 1519 bears the Phosphoserine mark.

It belongs to the TIAM family. Component of the Par polarity complex, composed of at least phosphorylated PRKCZ, PARD3 and TIAM1. Interacts with NTRK2; mediates the activation of RAC1 by BDNF. Interacts with MAPK8IP2 and CD44. Interacts with BAIAP2. Interacts with EPHA8; regulates clathrin-mediated endocytosis of EPHA8. Interacts with PARD3. Interacts (via PDZ domain) with CNTNAP4, SDC1 and SDC3 (via C-terminus). In terms of processing, ubiquitinated. Undergoes 'Lys-48' ubiquitination at Lys-1404 and Lys-1420 by a CUL3(KBTBD6/7) E3 ubiquitin ligase complex composed of CUL3, RBX1, KBTBD6 and KBTBD7. 'Lys-48' ubiquitination at Lys-1404 and Lys-1420 triggers proteasomal degradation. Ubiquitination at Lys-1404 and Lys-1420 by CUL3(KBTBD6/7) also requires the membrane-associated protein GABARAP and may therefore be spatially restricted within the cell. In terms of tissue distribution, found in virtually all analyzed tumor cell lines including B- and T-lymphomas, neuroblastomas, melanomas and carcinomas.

The protein resides in the cell junction. It is found in the cell membrane. Its function is as follows. Guanyl-nucleotide exchange factor that activates RHO-like proteins and connects extracellular signals to cytoskeletal activities. Activates RAC1, CDC42, and to a lesser extent RHOA and their downstream signaling to regulate processes like cell adhesion and cell migration. This Homo sapiens (Human) protein is Rho guanine nucleotide exchange factor TIAM1.